A 542-amino-acid polypeptide reads, in one-letter code: CTP synthase (542 aa).

Positions 1 to 265 are amidoligase domain; that stretch reads MTRFIFITGG…DTQVLKFFGM (265 aa). CTP is bound at residue Ser-13. Ser-13 serves as a coordination point for UTP. 14–19 contributes to the ATP binding site; the sequence is SLGKGL. Tyr-54 contacts L-glutamine. Asp-71 contributes to the ATP binding site. The Mg(2+) site is built by Asp-71 and Glu-139. CTP is bound by residues 146–148, 186–191, and Lys-222; these read DIE and KTKPTQ. UTP contacts are provided by residues 186–191 and Lys-222; that span reads KTKPTQ. The Glutamine amidotransferase type-1 domain maps to 291 to 541; that stretch reads TIAVVGKYTS…IRAAIEQSRL (251 aa). Residue Gly-353 coordinates L-glutamine. Residue Cys-380 is the Nucleophile; for glutamine hydrolysis of the active site. L-glutamine-binding positions include 381–384, Glu-404, and Arg-469; that span reads FGMQ. Residues His-514 and Glu-516 contribute to the active site.

Belongs to the CTP synthase family. Homotetramer.

It carries out the reaction UTP + L-glutamine + ATP + H2O = CTP + L-glutamate + ADP + phosphate + 2 H(+). The catalysed reaction is L-glutamine + H2O = L-glutamate + NH4(+). The enzyme catalyses UTP + NH4(+) + ATP = CTP + ADP + phosphate + 2 H(+). It participates in pyrimidine metabolism; CTP biosynthesis via de novo pathway; CTP from UDP: step 2/2. Allosterically activated by GTP, when glutamine is the substrate; GTP has no effect on the reaction when ammonia is the substrate. The allosteric effector GTP functions by stabilizing the protein conformation that binds the tetrahedral intermediate(s) formed during glutamine hydrolysis. Inhibited by the product CTP, via allosteric rather than competitive inhibition. Functionally, catalyzes the ATP-dependent amination of UTP to CTP with either L-glutamine or ammonia as the source of nitrogen. Regulates intracellular CTP levels through interactions with the four ribonucleotide triphosphates. The protein is CTP synthase of Rhodospirillum centenum (strain ATCC 51521 / SW).